Reading from the N-terminus, the 279-residue chain is Proteasome subunit beta (279 aa).

Positions Met1–Ala56 are cleaved as a propeptide — removed in mature form; by autocatalysis. Thr57 acts as the Nucleophile in catalysis.

This sequence belongs to the peptidase T1B family. As to quaternary structure, the 20S proteasome core is composed of 14 alpha and 14 beta subunits that assemble into four stacked heptameric rings, resulting in a barrel-shaped structure. The two inner rings, each composed of seven catalytic beta subunits, are sandwiched by two outer rings, each composed of seven alpha subunits. The catalytic chamber with the active sites is on the inside of the barrel. Has a gated structure, the ends of the cylinder being occluded by the N-termini of the alpha-subunits. Is capped by the proteasome-associated ATPase, ARC.

It localises to the cytoplasm. The enzyme catalyses Cleavage of peptide bonds with very broad specificity.. The protein operates within protein degradation; proteasomal Pup-dependent pathway. Its activity is regulated as follows. The formation of the proteasomal ATPase ARC-20S proteasome complex, likely via the docking of the C-termini of ARC into the intersubunit pockets in the alpha-rings, may trigger opening of the gate for substrate entry. Interconversion between the open-gate and close-gate conformations leads to a dynamic regulation of the 20S proteasome proteolysis activity. Functionally, component of the proteasome core, a large protease complex with broad specificity involved in protein degradation. This is Proteasome subunit beta from Renibacterium salmoninarum (strain ATCC 33209 / DSM 20767 / JCM 11484 / NBRC 15589 / NCIMB 2235).